The primary structure comprises 135 residues: DNA-directed RNA polymerase subunit omega (135 aa).

The protein belongs to the RNA polymerase subunit omega family. As to quaternary structure, the RNAP catalytic core consists of 2 alpha, 1 beta, 1 beta' and 1 omega subunit. When a sigma factor is associated with the core the holoenzyme is formed, which can initiate transcription.

It catalyses the reaction RNA(n) + a ribonucleoside 5'-triphosphate = RNA(n+1) + diphosphate. Its function is as follows. Promotes RNA polymerase assembly. Latches the N- and C-terminal regions of the beta' subunit thereby facilitating its interaction with the beta and alpha subunits. This is DNA-directed RNA polymerase subunit omega from Rhizobium meliloti (strain 1021) (Ensifer meliloti).